Consider the following 333-residue polypeptide: tRNA N6-adenosine threonylcarbamoyltransferase (333 aa).

2 residues coordinate Fe cation: H111 and H115. Residues 134-138 (VVSGG), D167, G180, D184, and N269 each bind substrate. Residue D297 coordinates Fe cation.

The protein belongs to the KAE1 / TsaD family. Requires Fe(2+) as cofactor.

Its subcellular location is the cytoplasm. It carries out the reaction L-threonylcarbamoyladenylate + adenosine(37) in tRNA = N(6)-L-threonylcarbamoyladenosine(37) in tRNA + AMP + H(+). In terms of biological role, required for the formation of a threonylcarbamoyl group on adenosine at position 37 (t(6)A37) in tRNAs that read codons beginning with adenine. Is involved in the transfer of the threonylcarbamoyl moiety of threonylcarbamoyl-AMP (TC-AMP) to the N6 group of A37, together with TsaE and TsaB. TsaD likely plays a direct catalytic role in this reaction. The sequence is that of tRNA N6-adenosine threonylcarbamoyltransferase from Carboxydothermus hydrogenoformans (strain ATCC BAA-161 / DSM 6008 / Z-2901).